The chain runs to 382 residues: Norsolorinic acid reductase B (382 aa).

Residue D64 coordinates NADP(+). Catalysis depends on Y69, which acts as the Proton donor. Position 143 (H143) interacts with substrate. NADP(+) is bound by residues 173 to 174 (SD), Q199, 228 to 238 (GVLNQGRFRTE), and 302 to 310 (RKVDHLTGV).

The protein belongs to the aldo/keto reductase family. Aldo/keto reductase 2 subfamily.

It participates in mycotoxin biosynthesis; aflatoxin biosynthesis. Norsolorinic acid reductase; part of the gene cluster that mediates the biosynthesis of aflatoxins, a group of polyketide-derived furanocoumarins, and part of the most toxic and carcinogenic compounds among the known mycotoxins. The four major aflatoxins produced by A.parasiticus are aflatoxin B1 (AFB1), aflatoxin B2 (AFB2), aflatoxin G1 (AFG1) and aflatoxin G2 (AFG2). Within the aflatoxin pathway, the norsolorinic acid reductase aflE may play a role in the conversion of norsolorinic acid (NOR) to averantin (AVN). The biosynthesis of aflatoxins begins with the norsolorinic acid synthase aflC that combines a hexanoyl starter unit produced by the fatty acid synthase aflA/aflB and 7 malonyl-CoA extender units to synthesize the precursor NOR. The second step is the conversion of NOR to averantin and requires the norsolorinic acid ketoreductase aflD, which catalyzes the dehydration of norsolorinic acid to form (1'S)-averantin. The norsolorinic acid reductases aflE and aflF may also play a role in the conversion of NOR to AVN. The cytochrome P450 monooxygenase aflG then catalyzes the hydroxylation of AVN to 5'hydroxyaverantin (HAVN). The next step is performed by the 5'-hydroxyaverantin dehydrogenase aflH that transforms HAVN to 5'-oxoaverantin (OAVN) which is further converted to averufin (AVF) by aflK that plays a dual role in the pathway, as a 5'-oxoaverantin cyclase that mediates conversion of 5'-oxoaverantin, as well as a versicolorin B synthase in a later step in the pathway. The averufin oxidase aflI catalyzes the conversion of AVF to versiconal hemiacetal acetate (VHA). VHA is then the substrate for the versiconal hemiacetal acetate esterase aflJ to yield versiconal (VAL). Versicolorin B synthase aflK then converts VAL to versicolorin B (VERB) by closing the bisfuran ring of aflatoxin which is required for DNA-binding, thus giving to aflatoxin its activity as a mutagen. Then, the activity of the versicolorin B desaturase aflL leads to versicolorin A (VERA). A branch point starts from VERB since it can also be converted to dihydrodemethylsterigmatocystin (DMDHST), probably also by aflL, VERA being a precursor for aflatoxins B1 and G1, and DMDHST for aflatoxins B2 and G2. Next, the versicolorin reductase aflM and the cytochrome P450 monooxygenase aflN are involved in conversion of VERA to demethylsterigmatocystin (DMST). AflX and aflY seem also involved in this step, through probable aflX-mediated epoxide ring-opening step following versicolorin A oxidation and aflY-mediated Baeyer-Villiger oxidation required for the formation of the xanthone ring. The methyltransferase aflO then leads to the modification of DMST to sterigmatocystin (ST), and of DMDHST to dihydrosterigmatocystin (DHST). Both ST and DHST are then substrates of the O-methyltransferase aflP to yield O-methylsterigmatocystin (OMST) and dihydro-O-methylsterigmatocystin (DHOMST), respectively. Finally OMST is converted to aflatoxins B1 and G1, and DHOMST to aflatoxins B2 and G2, via the action of several enzymes including O-methylsterigmatocystin oxidoreductase aflQ, the cytochrome P450 monooxygenase aflU, but also the NADH-dependent flavin oxidoreductase nadA which is specifically required for the synthesis of AFG1. The protein is Norsolorinic acid reductase B of Aspergillus parasiticus (strain ATCC 56775 / NRRL 5862 / SRRC 143 / SU-1).